We begin with the raw amino-acid sequence, 331 residues long: RNA 3'-terminal phosphate cyclase (331 aa).

Residues Gln100 and 276 to 280 each bind ATP; that span reads HLADQ. The active-site Tele-AMP-histidine intermediate is His301.

The protein belongs to the RNA 3'-terminal cyclase family. Type 1 subfamily.

It is found in the cytoplasm. The enzyme catalyses a 3'-end 3'-phospho-ribonucleotide-RNA + ATP = a 3'-end 2',3'-cyclophospho-ribonucleotide-RNA + AMP + diphosphate. Functionally, catalyzes the conversion of 3'-phosphate to a 2',3'-cyclic phosphodiester at the end of RNA. The mechanism of action of the enzyme occurs in 3 steps: (A) adenylation of the enzyme by ATP; (B) transfer of adenylate to an RNA-N3'P to produce RNA-N3'PP5'A; (C) and attack of the adjacent 2'-hydroxyl on the 3'-phosphorus in the diester linkage to produce the cyclic end product. The biological role of this enzyme is unknown but it is likely to function in some aspects of cellular RNA processing. In Methanococcoides burtonii (strain DSM 6242 / NBRC 107633 / OCM 468 / ACE-M), this protein is RNA 3'-terminal phosphate cyclase.